Here is a 445-residue protein sequence, read N- to C-terminus: Trigger factor (445 aa).

Positions 162 to 247 (GDQVTIDAIG…IKAVHTAEPT (86 aa)) constitute a PPIase FKBP-type domain.

It belongs to the FKBP-type PPIase family. Tig subfamily.

The protein resides in the cytoplasm. It carries out the reaction [protein]-peptidylproline (omega=180) = [protein]-peptidylproline (omega=0). Involved in protein export. Acts as a chaperone by maintaining the newly synthesized protein in an open conformation. Functions as a peptidyl-prolyl cis-trans isomerase. The sequence is that of Trigger factor from Rickettsia peacockii (strain Rustic).